A 422-amino-acid polypeptide reads, in one-letter code: UDP-N-acetylglucosamine 1-carboxyvinyltransferase (422 aa).

Position 22 to 23 (22 to 23 (KN)) interacts with phosphoenolpyruvate. Arg-93 lines the UDP-N-acetyl-alpha-D-glucosamine pocket. Catalysis depends on Cys-117, which acts as the Proton donor. Position 117 is a 2-(S-cysteinyl)pyruvic acid O-phosphothioketal (Cys-117). Residues 122 to 126 (RPVDL), Asp-308, and Leu-330 each bind UDP-N-acetyl-alpha-D-glucosamine.

Belongs to the EPSP synthase family. MurA subfamily.

It localises to the cytoplasm. It carries out the reaction phosphoenolpyruvate + UDP-N-acetyl-alpha-D-glucosamine = UDP-N-acetyl-3-O-(1-carboxyvinyl)-alpha-D-glucosamine + phosphate. It participates in cell wall biogenesis; peptidoglycan biosynthesis. In terms of biological role, cell wall formation. Adds enolpyruvyl to UDP-N-acetylglucosamine. This is UDP-N-acetylglucosamine 1-carboxyvinyltransferase from Helicobacter pylori (strain P12).